Reading from the N-terminus, the 405-residue chain is Cellobiose 2-epimerase (405 aa).

Belongs to the cellobiose 2-epimerase family.

It carries out the reaction D-cellobiose = beta-D-glucosyl-(1-&gt;4)-D-mannopyranose. Functionally, catalyzes the reversible epimerization of cellobiose to 4-O-beta-D-glucopyranosyl-D-mannose (Glc-Man). Can also epimerize lactose to epilactose. This is Cellobiose 2-epimerase (ce13) from Eubacterium cellulosolvens.